Consider the following 364-residue polypeptide: MTRLRKIIHVDMDAFYASVEQRDDPSLRGKPVVVAWRGARSVVCAASYEARVFGVRSAMPAVRAERLCPDAIFVPPDFARYKAVSQQVRAIFLRHTDLVEPLSLDEAYLDVSEPKSGIELATDIARTIRAQIREETNLTASAGIAPNKFLAKIASDWRKPDGQFVIPPQRVDAFLAPLPVNRVPGVGKVMEGKLAARGIVTCGDLRQWALIDLEEAFGSFGRSLYNRARGIDERPVEPDQQVQSISSEDTFAEDLLLEDLTEAIVQLAGKTWNATRKTERIGHTVVLKLKTAQFRILTRSFTPERPPESMEELRDIALALRARVDLPAETRYRLVGVGLGGFREKEAVVQGELFEQGPNDSPRS.

The 181-residue stretch at isoleucine 7 to glycine 187 folds into the UmuC domain. Positions 11 and 105 each coordinate Mg(2+). Glutamate 106 is an active-site residue.

Belongs to the DNA polymerase type-Y family. In terms of assembly, monomer. Requires Mg(2+) as cofactor.

It localises to the cytoplasm. The catalysed reaction is DNA(n) + a 2'-deoxyribonucleoside 5'-triphosphate = DNA(n+1) + diphosphate. Functionally, poorly processive, error-prone DNA polymerase involved in untargeted mutagenesis. Copies undamaged DNA at stalled replication forks, which arise in vivo from mismatched or misaligned primer ends. These misaligned primers can be extended by PolIV. Exhibits no 3'-5' exonuclease (proofreading) activity. May be involved in translesional synthesis, in conjunction with the beta clamp from PolIII. The chain is DNA polymerase IV from Stenotrophomonas maltophilia (strain K279a).